Reading from the N-terminus, the 101-residue chain is Urease subunit beta (101 aa).

The protein belongs to the urease beta subunit family. In terms of assembly, heterotrimer of UreA (gamma), UreB (beta) and UreC (alpha) subunits. Three heterotrimers associate to form the active enzyme.

Its subcellular location is the cytoplasm. It carries out the reaction urea + 2 H2O + H(+) = hydrogencarbonate + 2 NH4(+). It functions in the pathway nitrogen metabolism; urea degradation; CO(2) and NH(3) from urea (urease route): step 1/1. This is Urease subunit beta from Burkholderia mallei (strain NCTC 10247).